A 167-amino-acid chain; its full sequence is Small ribosomal subunit protein uS5 (167 aa).

One can recognise an S5 DRBM domain in the interval 11 to 74 (LQEKLIAVNR…EKARRNMINV (64 aa)).

Belongs to the universal ribosomal protein uS5 family. In terms of assembly, part of the 30S ribosomal subunit. Contacts proteins S4 and S8.

Its function is as follows. With S4 and S12 plays an important role in translational accuracy. In terms of biological role, located at the back of the 30S subunit body where it stabilizes the conformation of the head with respect to the body. This is Small ribosomal subunit protein uS5 from Escherichia coli O139:H28 (strain E24377A / ETEC).